A 223-amino-acid polypeptide reads, in one-letter code: Ion-translocating oxidoreductase complex subunit E (223 aa).

6 helical membrane passes run 17 to 37 (NGVLCMLLGMCPTMAMTGTAT), 40 to 60 (LGMGLATAAVMAASNLMVAMF), 70 to 90 (IPVYILIVAANVTFVDLGMNA), 94 to 114 (ELYKVLGLFIPLIVSNCLPLA), 129 to 149 (FLDGLFMGLGFTLALTAIGAV), and 182 to 202 (WGILVLILPPGGFLIAGLMVV).

This sequence belongs to the NqrDE/RnfAE family. The complex is composed of six subunits: RnfA, RnfB, RnfC, RnfD, RnfE and RnfG.

It is found in the cell inner membrane. Its function is as follows. Part of a membrane-bound complex that couples electron transfer with translocation of ions across the membrane. The sequence is that of Ion-translocating oxidoreductase complex subunit E from Paramagnetospirillum magneticum (strain ATCC 700264 / AMB-1) (Magnetospirillum magneticum).